Reading from the N-terminus, the 538-residue chain is Putative ABC1 protein At2g40090 (538 aa).

The signal sequence occupies residues Met1–Ala26.

Belongs to the protein kinase superfamily. ADCK protein kinase family.

This Arabidopsis thaliana (Mouse-ear cress) protein is Putative ABC1 protein At2g40090.